Reading from the N-terminus, the 306-residue chain is HORMA domain-containing protein 2 (306 aa).

One can recognise an HORMA domain in the interval 29–232 (HESLVVVKKL…SGFHSMKVKV (204 aa)). At S271 the chain carries Phosphoserine.

As to quaternary structure, interacts with HORMAD1. Post-translationally, phosphorylated in a SPO11-dependent manner. Specifically expressed in meiotic germ cells.

It is found in the nucleus. The protein resides in the chromosome. Essential for synapsis surveillance during meiotic prophase via the recruitment of ATR activity. Plays a key role in the male mid-pachytene checkpoint and the female meiotic prophase checkpoint: required for efficient build-up of ATR activity on unsynapsed chromosome regions, a process believed to form the basis of meiotic silencing of unsynapsed chromatin (MSUC) and meiotic prophase quality control in both sexes. Required for the DNA double-strand break-independent, BRCA1-dependent activation of ATR on the sex chromosomes that is essential for normal sex body formation. This Mus musculus (Mouse) protein is HORMA domain-containing protein 2 (Hormad2).